The sequence spans 704 residues: Glycogen [starch] synthase, liver (704 aa).

2 positions are modified to phosphoserine: Ser8 and Ser11. UDP is bound at residue Lys40. 2 residues coordinate UDP-alpha-D-glucose: His205 and Arg211. The alpha-D-glucose 6-phosphate site is built by His291, Glu292, Gln294, His297, and Lys301. Arg331 is a binding site for UDP. Arg331 is a binding site for UDP-alpha-D-glucose. His501 is a binding site for alpha-D-glucose 6-phosphate. Positions 510, 512, and 513 each coordinate UDP-alpha-D-glucose. Thr515 contacts UDP. Alpha-D-glucose 6-phosphate-binding residues include Arg582 and Arg586. Positions 620 to 704 are disordered; sequence KFHLEPTSPP…KKKLHGEYKN (85 aa). The residue at position 627 (Ser627) is a Phosphoserine. Ser641, Ser645, Ser649, and Ser653 each carry phosphoserine; by GSK3-alpha and GSK3-beta. The span at 647–657 shows a compositional bias: low complexity; sequence SGSQTSSPQSS. Ser657 is modified (phosphoserine; by CK2). The segment covering 659 to 675 has biased composition (acidic residues); that stretch reads VENEGDEDERYDEEEEA. The residue at position 684 (Ser684) is a Phosphoserine.

It belongs to the glycosyltransferase 3 family. Part of the glycogen synthase (GS)-glycogenin complex, a heterooctamer composed of a tetramer of GS and 2 dimers of glycogenin, where each GS protomer binds to one glycogenin subunit (via glycogenin C-terminus); the GS tetramer may dissociate from glycogenin dimers to continue glycogen polymerization on its own. May also form a heterooctamer complex with GYG1 (via GYG1 C-terminus). Post-translationally, primed phosphorylation at Ser-657 (site 5) by CSNK2A1 and CSNK2A2 is required for inhibitory phosphorylation at Ser-641 (site 3a), Ser-645 (site 3b), Ser-649 (site 3c) and Ser-653 (site 4) by GSK3A an GSK3B. Dephosphorylation at Ser-641 and Ser-645 by PP1 activates the enzyme. Phosphorylation at Ser-8 is not required for interaction with GYG1. Interaction with GYG1 does not regulate the phosphorylation at Ser-8 and Ser-641. In terms of tissue distribution, specifically expressed in liver (at protein level).

It carries out the reaction [(1-&gt;4)-alpha-D-glucosyl](n) + UDP-alpha-D-glucose = [(1-&gt;4)-alpha-D-glucosyl](n+1) + UDP + H(+). It functions in the pathway glycan biosynthesis; glycogen biosynthesis. With respect to regulation, allosteric activation by glucose-6-phosphate. Phosphorylation reduces the activity towards UDP-glucose. When in the non-phosphorylated state, glycogen synthase does not require glucose-6-phosphate as an allosteric activator; when phosphorylated it does. Functionally, glycogen synthase participates in the glycogen biosynthetic process along with glycogenin and glycogen branching enzyme. Extends the primer composed of a few glucose units formed by glycogenin by adding new glucose units to it. In this context, glycogen synthase transfers the glycosyl residue from UDP-Glc to the non-reducing end of alpha-1,4-glucan. The chain is Glycogen [starch] synthase, liver from Rattus norvegicus (Rat).